Consider the following 178-residue polypeptide: Fatty-acid and retinol-binding protein 1 (178 aa).

The signal sequence occupies residues 1 to 16 (MYHQLILMALIGVIMA). N-linked (GlcNAc...) asparagine glycosylation is found at Asn-44 and Asn-75. 2 coiled-coil regions span residues 67–89 (DAAL…ELRN) and 122–154 (QKLD…LKAT). A glycan (N-linked (GlcNAc...) asparagine) is linked at Asn-157.

It belongs to the fatty-acid and retinol-binding protein (FARBP) family. N-glycosylated.

Its subcellular location is the secreted. In terms of biological role, binds retinol and different fatty acids. The protein is Fatty-acid and retinol-binding protein 1 of Onchocerca ochengi (Filarial nematode worm).